The chain runs to 607 residues: UvrABC system protein C (607 aa).

In terms of domain architecture, GIY-YIG spans 15-93; that stretch reads RKPGVYRMLD…IKELKPPYNI (79 aa). One can recognise a UVR domain in the interval 203–238; that stretch reads REVADQLSTDMEAAAAALEFEKAALLRDQLAAIQAV. A compositionally biased stretch (basic residues) spans 542 to 551; sequence HRARRGKARK. The segment at 542–561 is disordered; sequence HRARRGKARKQSTLDEIPGI.

Belongs to the UvrC family. Interacts with UvrB in an incision complex.

The protein resides in the cytoplasm. The UvrABC repair system catalyzes the recognition and processing of DNA lesions. UvrC both incises the 5' and 3' sides of the lesion. The N-terminal half is responsible for the 3' incision and the C-terminal half is responsible for the 5' incision. This Alcanivorax borkumensis (strain ATCC 700651 / DSM 11573 / NCIMB 13689 / SK2) protein is UvrABC system protein C.